The sequence spans 53 residues: Dihydrolipoyl dehydrogenase (53 aa).

Residues 35-44 (EKYPTFGGTC) and Lys-53 each bind FAD. Cysteines 44 and 49 form a disulfide.

Belongs to the class-I pyridine nucleotide-disulfide oxidoreductase family. As to quaternary structure, homodimer. The cofactor is FAD.

The protein localises to the mitochondrion. The enzyme catalyses N(6)-[(R)-dihydrolipoyl]-L-lysyl-[protein] + NAD(+) = N(6)-[(R)-lipoyl]-L-lysyl-[protein] + NADH + H(+). Lipoamide reduction and the NADH -&gt; NAD reaction are both completely inhibited by copper and cadmium ions. Its function is as follows. Lipoamide dehydrogenase is a component of the glycine cleavage system as well as of the alpha-ketoacid dehydrogenase complexes. This enzyme has lipoamide dehydrogenase activity and NADH -&gt; NAD transhydrogenation activity. Also displays some NADH-ferricyanide reductase and NADPH -&gt; NAD transydrogenation activities. In Hymenolepis diminuta (Rat tapeworm), this protein is Dihydrolipoyl dehydrogenase.